The primary structure comprises 957 residues: MTNPSEGTSSSAQSLAYRYTPELANAIEREWQNYWTDKGTFNAPNPVGDLAPEDGRELPGDKLFVQDMFPYPSGAGLHVGHPLGYIATDVFARYNRMLGKNVLHTLGYDAFGLPAEQYAIQTGTHPRTTTMANIENMKRQLGALGLGHDPRRAVASTDPEFYKWTQWIFLQIFNSWFDEEQQKARPISELIPLLESGEIPTRDGADYNGLDRVAKQKAIDEFRLVYRSNSTVNWCPGLGTVLANEEVTADGRSERGNFPVFRKNLSQWMMRITAYSDRLIDDLELLDWPEKVKSMQRNWIGRSRGAEVDFTAEGETITVFTTRPDTLFGATYMVLAPEHELVDVLVSRGTGSYDGVDPRWTNGQATPAEAVAAYRASIAAKSDLERQENKDKTGVFLGVHATNPVNGEQIPVFIADYVLTGYGTGAIMAVPAHDDRDYEFATVFGLPIVEVVAGGNIAEAAYTASGESINSANDQGLDINGLAMVDAVARTIEWLEEKQLGRGTIQYKLRDWLFARQRYWGEPFPVVYDEDGVAYALPESMLPVELPEVEDYKPVSFDPEDADSEPSPPLAKAREWVEVELDLGDGVKKYTRDTNVMPQWAGSSWYQLRYIDPTNDDQFCNLENEAYWTGPRPDVHGPNDPGGVDLYVGGVEHAVLHLLYSRFWHKVLYDLGYVTSKEPYRRLYNQGYIQAFAYTDSRGVYVPAEEVEEKDGKFFYQGEEVTQEYGKMGKSLKNAVAPDDICNNYGADTLRVYEMSMGPLDTSRPWATKDVVGAQRFLQRLWRLIVDENTGEVLTRDEALTDEDNKHLHRTIAGVRDDYANLRVNTVVAKLIEYVNYLTKTYPDTIPTGAVLPLVVMVSPVAPHIAEELWKKLGHTDTVTYEPFPTFEEKWLTDDEVELPVQINGKVRSRITVAADASQEQIIEVALADEKIALQIEGKNLIKQIVIPGRMVNLVVK.

The short motif at 70–81 is the 'HIGH' region element; it reads PYPSGAGLHVGH. Residues 727–731 carry the 'KMSKS' region motif; the sequence is KMGKS. Residue Lys-730 participates in ATP binding.

Belongs to the class-I aminoacyl-tRNA synthetase family.

It is found in the cytoplasm. It catalyses the reaction tRNA(Leu) + L-leucine + ATP = L-leucyl-tRNA(Leu) + AMP + diphosphate. This chain is Leucine--tRNA ligase, found in Corynebacterium efficiens (strain DSM 44549 / YS-314 / AJ 12310 / JCM 11189 / NBRC 100395).